A 397-amino-acid polypeptide reads, in one-letter code: Elongation factor Tu-1 (397 aa).

Residues 10–206 form the tr-type G domain; that stretch reads KPHVNIGTIG…AVDESIPEPE (197 aa). The interval 19-26 is G1; the sequence is GHIDHGKT. 19 to 26 contacts GTP; the sequence is GHIDHGKT. Threonine 26 lines the Mg(2+) pocket. Positions 62 to 66 are G2; it reads GITIS. Residues 83–86 form a G3 region; it reads DCPG. GTP is bound by residues 83–87 and 138–141; these read DCPGH and NKAD. A G4 region spans residues 138-141; the sequence is NKAD. The G5 stretch occupies residues 176 to 178; the sequence is SAL.

It belongs to the TRAFAC class translation factor GTPase superfamily. Classic translation factor GTPase family. EF-Tu/EF-1A subfamily. In terms of assembly, monomer.

It is found in the cytoplasm. The enzyme catalyses GTP + H2O = GDP + phosphate + H(+). In terms of biological role, GTP hydrolase that promotes the GTP-dependent binding of aminoacyl-tRNA to the A-site of ribosomes during protein biosynthesis. In Streptomyces ramocissimus, this protein is Elongation factor Tu-1.